The primary structure comprises 461 residues: Phytase A (461 aa).

A disulfide bond links C22 and C31. 1D-myo-inositol hexakisphosphate is bound by residues Q41, Y42, R71, H72, R75, and T78. 4 cysteine pairs are disulfide-bonded: C61–C405, C205–C456, C254–C272, and C427–C435. Residue H72 is the Nucleophile of the active site. N95 and N110 each carry an N-linked (GlcNAc...) asparagine glycan. 1D-myo-inositol hexakisphosphate is bound at residue R155. N-linked (GlcNAc...) asparagine glycosylation is present at N197. K291 serves as a coordination point for 1D-myo-inositol hexakisphosphate. N-linked (GlcNAc...) asparagine glycans are attached at residues N329 and N343. 2 residues coordinate 1D-myo-inositol hexakisphosphate: H352 and D353. An N-linked (GlcNAc...) asparagine glycan is attached at N367.

This sequence belongs to the histidine acid phosphatase family. As to quaternary structure, monomer. Post-translationally, glycosylated.

Its subcellular location is the secreted. It catalyses the reaction 1D-myo-inositol hexakisphosphate + H2O = 1D-myo-inositol 1,2,4,5,6-pentakisphosphate + phosphate. It carries out the reaction 1D-myo-inositol 1,2,4,5,6-pentakisphosphate + H2O = 1D-myo-inositol 1,2,5,6-tetrakisphosphate + phosphate. The enzyme catalyses 1D-myo-inositol 1,2,5,6-tetrakisphosphate + H2O = 1D-myo-inositol 1,2,6-trisphosphate + phosphate. The catalysed reaction is 1D-myo-inositol 1,2,6-trisphosphate + H2O = 1D-myo-inositol 1,2-bisphosphate + phosphate. It catalyses the reaction 1D-myo-inositol 1,2-bisphosphate + H2O = 1D-myo-inositol 2-phosphate + phosphate. Functionally, catalyzes the phosphate monoester hydrolysis of phytic acid (myo-inositol hexakisphosphate), which results in the stepwise formation of myo-inositol pentakis-, tetrakis-, tris-, bis-, and monophosphates, as well as the liberation of inorganic phosphate. Myo-inositol 2-monophosphate is the end product. The polypeptide is Phytase A (Penicillium oxalicum).